Here is a 373-residue protein sequence, read N- to C-terminus: Type II secretion system protein L (373 aa).

Topologically, residues Met-1–Asn-214 are cytoplasmic. The helical transmembrane segment at Leu-215 to Leu-233 threads the bilayer. Topologically, residues Asp-234–Arg-373 are periplasmic.

The protein belongs to the GSP L family. Type II secretion system is composed of four main components: the outer membrane complex, the inner membrane complex, the cytoplasmic secretion ATPase and the periplasm-spanning pseudopilus. Forms homodimers. Interacts with XpsM/GspM. Interacts with XpsE/GspE and XpsF/GspF.

Its subcellular location is the cell inner membrane. In terms of biological role, inner membrane component of the type II secretion system required for the energy-dependent secretion of extracellular factors such as proteases and toxins from the periplasm. Plays a role in the complex assembly and recruits XpsM resulting in a stable complex in the inner membrane. Provides thus a link between the energy-providing XpsE protein in the cytoplasm and the rest of the T2SS machinery. The sequence is that of Type II secretion system protein L (pefL) from Xanthomonas campestris pv. campestris (strain ATCC 33913 / DSM 3586 / NCPPB 528 / LMG 568 / P 25).